We begin with the raw amino-acid sequence, 199 residues long: UPF0329 protein ECU01_0120/ECU01_1490/ECU08_0050 (199 aa).

The protein belongs to the UPF0329 family.

The sequence is that of UPF0329 protein ECU01_0120/ECU01_1490/ECU08_0050 from Encephalitozoon cuniculi (strain GB-M1) (Microsporidian parasite).